Consider the following 543-residue polypeptide: Sensor histidine kinase DcuS (543 aa).

The Cytoplasmic segment spans residues 1–20 (MRHSLPYRMLRKRPMKLSTT). The chain crosses the membrane as a helical span at residues 21–41 (VILMVSAVLFSVLLVVHLIYF). Residues 42–181 (SQISDMTRDG…VTQQINDSRW (140 aa)) are Periplasmic-facing. (R)-malate contacts are provided by residues 107-110 (RYSH), Lys-121, 140-142 (GFL), and Arg-147. The chain crosses the membrane as a helical span at residues 182–202 (SIIWSVLFGMLVGLIGTCILV). Topologically, residues 203–543 (KVLKKILFGL…IPWDGERSNR (341 aa)) are cytoplasmic. A PAS domain is found at 212 to 323 (LEPYEISTLF…IIGAISTFRD (112 aa)). A Histidine kinase domain is found at 346–538 (ERSHEFMNKL…QFFVQIPWDG (193 aa)). At His-349 the chain carries Phosphohistidine; by autocatalysis.

As to quaternary structure, homodimer. Autophosphorylated. The phosphoryl group is rapidly transferred to DcuR.

The protein resides in the cell inner membrane. The enzyme catalyses ATP + protein L-histidine = ADP + protein N-phospho-L-histidine.. In terms of biological role, member of the two-component regulatory system DcuR/DcuS. Involved in the C4-dicarboxylate-stimulated regulation of the genes encoding the anaerobic fumarate respiratory system (frdABCD; nuoAN; dcuB; sdhCDAB; etc.). Weakly regulates the aerobic C4-dicarboxylate transporter dctA. Activates DcuR by phosphorylation. The chain is Sensor histidine kinase DcuS (dcuS) from Escherichia coli O157:H7.